We begin with the raw amino-acid sequence, 246 residues long: NH(3)-dependent NAD(+) synthetase (246 aa).

29 to 36 is an ATP binding site; it reads GLSGGIDS. Aspartate 35 contacts Mg(2+). A deamido-NAD(+)-binding site is contributed by arginine 110. Threonine 130 serves as a coordination point for ATP. Position 135 (glutamate 135) interacts with Mg(2+). ATP is bound by residues lysine 159 and serine 181.

This sequence belongs to the NAD synthetase family. In terms of assembly, homodimer.

The catalysed reaction is deamido-NAD(+) + NH4(+) + ATP = AMP + diphosphate + NAD(+) + H(+). Its pathway is cofactor biosynthesis; NAD(+) biosynthesis; NAD(+) from deamido-NAD(+) (ammonia route): step 1/1. Its function is as follows. Catalyzes the ATP-dependent amidation of deamido-NAD to form NAD. Uses ammonia as a nitrogen source. The protein is NH(3)-dependent NAD(+) synthetase of Campylobacter jejuni subsp. jejuni serotype O:6 (strain 81116 / NCTC 11828).